The following is a 303-amino-acid chain: Coenzyme PQQ synthesis protein B (303 aa).

Belongs to the PqqB family.

The protein operates within cofactor biosynthesis; pyrroloquinoline quinone biosynthesis. In terms of biological role, may be involved in the transport of PQQ or its precursor to the periplasm. This is Coenzyme PQQ synthesis protein B from Pseudomonas putida (strain GB-1).